Here is a 1712-residue protein sequence, read N- to C-terminus: Probable ATP-dependent RNA helicase DDX60 (1712 aa).

One can recognise a Helicase ATP-binding domain in the interval 772 to 939; the sequence is LDVVDKNESA…WLQSVKWYWK (168 aa). 785-792 is a binding site for ATP; sequence APTSSGKT. The DEVH box signature appears at 889 to 892; the sequence is DEVH. Residues 1226–1370 enclose the Helicase C-terminal domain; sequence YADQKAVDTE…HFPLSITLVL (145 aa).

This sequence belongs to the helicase family. As to quaternary structure, interacts with EXOSC1, EXOSC4, RIGI, IFIH1/MDA5 and DHX58/LGP2. As to expression, brain, lymph node, prostate, stomach, thyroid, tongue, trachea, uterus, skeletal muscle, spleen, kidney, liver and small intestine.

It localises to the cytoplasm. It carries out the reaction ATP + H2O = ADP + phosphate + H(+). Positively regulates RIGI- and IFIH1/MDA5-dependent type I interferon and interferon inducible gene expression in response to viral infection. Binds ssRNA, dsRNA and dsDNA and can promote the binding of RIGI to dsRNA. Exhibits antiviral activity against hepatitis C virus and vesicular stomatitis virus (VSV). The chain is Probable ATP-dependent RNA helicase DDX60 (DDX60) from Homo sapiens (Human).